The following is a 631-amino-acid chain: Transforming acidic coiled-coil-containing protein 3 (631 aa).

An N-acetylserine modification is found at Ser-2. Ser-39 bears the Phosphoserine mark. Positions 42 to 59 (ENVPPQSQAKATNVTFQT) are enriched in polar residues. The segment at 42-70 (ENVPPQSQAKATNVTFQTPPRDPQTHRIL) is disordered. A Phosphoserine modification is found at Ser-71. Necessary but not sufficient for spindle localization stretches follow at residues 311 to 366 (EESF…PMPV) and 384 to 631 (KPTE…MEKI). At Ser-347 the chain carries Phosphoserine; by AURKA. Residues 363–385 (PMPVAPITNSTQDTEEESGSGKP) form a disordered region. Residues 431 to 630 (QKDLDAVVNV…CDDLISKMEK (200 aa)) are a coiled coil.

This sequence belongs to the TACC family. Interacts with GCN5L2 and PCAF. The coiled coil C-terminal region interacts with AH receptor nuclear translocator protein (ARNT) and ARNT2. Interacts with CCDC100/CEP120. Interacts with CKAP5 independently of clathrin. Interacts with CKAP5 and clathrin forming the TACC3/ch-TOG/clathrin complex located at spindle inter-microtubules bridges; TACC3 (phosphorylated at Ser-347 by AURKA) and CLTC are proposed to form a composite microtubule interaction surface. In terms of tissue distribution, embryonically expressed.

Its subcellular location is the cytoplasm. It is found in the cytoskeleton. It localises to the microtubule organizing center. The protein resides in the centrosome. The protein localises to the spindle pole. Its function is as follows. Plays a role in the microtubule-dependent coupling of the nucleus and the centrosome. Involved in the processes that regulate centrosome-mediated interkinetic nuclear migration (INM) of neural progenitors. Acts as a component of the TACC3/ch-TOG/clathrin complex proposed to contribute to stabilization of kinetochore fibers of the mitotic spindle by acting as inter-microtubule bridge. The TACC3/ch-TOG/clathrin complex is required for the maintenance of kinetochore fiber tension. May be involved in the control of cell growth and differentiation. May have a role in embryonic development. In Mus musculus (Mouse), this protein is Transforming acidic coiled-coil-containing protein 3 (Tacc3).